Consider the following 88-residue polypeptide: Cell division topological specificity factor (88 aa).

Belongs to the MinE family.

In terms of biological role, prevents the cell division inhibition by proteins MinC and MinD at internal division sites while permitting inhibition at polar sites. This ensures cell division at the proper site by restricting the formation of a division septum at the midpoint of the long axis of the cell. This chain is Cell division topological specificity factor, found in Salmonella agona (strain SL483).